Reading from the N-terminus, the 484-residue chain is Trigger factor (484 aa).

The PPIase FKBP-type domain occupies 162-243 (GDFISIDLSA…VKSVKERELP (82 aa)). Residues 427-484 (DGNTIDTSEFFGKPPENDVTDLLDDDADGDAGVDADGDTENSAEPADADSADTAQGAG) form a disordered region. Over residues 444–476 (DVTDLLDDDADGDAGVDADGDTENSAEPADADS) the composition is skewed to acidic residues.

The protein belongs to the FKBP-type PPIase family. Tig subfamily.

It localises to the cytoplasm. It carries out the reaction [protein]-peptidylproline (omega=180) = [protein]-peptidylproline (omega=0). In terms of biological role, involved in protein export. Acts as a chaperone by maintaining the newly synthesized protein in an open conformation. Functions as a peptidyl-prolyl cis-trans isomerase. The protein is Trigger factor of Mycobacterium ulcerans (strain Agy99).